The chain runs to 880 residues: Alanine--tRNA ligase (880 aa).

Zn(2+)-binding residues include His566, His570, Cys668, and His672.

Belongs to the class-II aminoacyl-tRNA synthetase family. It depends on Zn(2+) as a cofactor.

The protein localises to the cytoplasm. The enzyme catalyses tRNA(Ala) + L-alanine + ATP = L-alanyl-tRNA(Ala) + AMP + diphosphate. Catalyzes the attachment of alanine to tRNA(Ala) in a two-step reaction: alanine is first activated by ATP to form Ala-AMP and then transferred to the acceptor end of tRNA(Ala). Also edits incorrectly charged Ser-tRNA(Ala) and Gly-tRNA(Ala) via its editing domain. This Alkaliphilus oremlandii (strain OhILAs) (Clostridium oremlandii (strain OhILAs)) protein is Alanine--tRNA ligase.